Here is a 335-residue protein sequence, read N- to C-terminus: Thioredoxin-related transmembrane protein 4 (335 aa).

Residues 1-20 form the signal peptide; sequence MTGGFCVPVLLAAWLAAAAA. The Thioredoxin domain maps to 26–133; the sequence is AALPAEESRV…YEDLQNYILE (108 aa). Residues C60 and C63 each act as nucleophile in the active site. Cysteines 60 and 63 form a disulfide. Residues 186-206 form a helical membrane-spanning segment; the sequence is VFFVIATLVFGLFMGLILVVI. The interval 222–316 is disordered; the sequence is CEQEQSTGEA…EDGAHPADTQ (95 aa). Acidic residues predominate over residues 238–280; it reads QDAEEEKDDSNEEENKDSLVDDEEEKEDIGDEDEGEEDEEEDN. 2 positions are modified to phosphoserine: S247 and S255. The span at 286 to 298 shows a compositional bias: basic and acidic residues; sequence AEERSDTNERAVV.

The protein localises to the nucleus inner membrane. It localises to the endoplasmic reticulum membrane. This is Thioredoxin-related transmembrane protein 4 (Tmx4) from Mus musculus (Mouse).